Reading from the N-terminus, the 41-residue chain is Photosystem I reaction center subunit IX (41 aa).

A helical transmembrane segment spans residues 7-27 (YLSVAPVLSTLWFGALAGLLI).

This sequence belongs to the PsaJ family.

It is found in the plastid. Its subcellular location is the chloroplast thylakoid membrane. Its function is as follows. May help in the organization of the PsaE and PsaF subunits. The sequence is that of Photosystem I reaction center subunit IX from Jasminum nudiflorum (Winter jasmine).